Here is a 227-residue protein sequence, read N- to C-terminus: Phosphoglycolate phosphatase (227 aa).

Asp8 functions as the Nucleophile in the catalytic mechanism. Residues Asp8 and Asp10 each coordinate Mg(2+). Lys150 contacts substrate. Mg(2+)-binding residues include Asp173 and Asp177.

Belongs to the archaeal SPP-like hydrolase family. It depends on Mg(2+) as a cofactor.

The enzyme catalyses 2-phosphoglycolate + H2O = glycolate + phosphate. Functionally, catalyzes the dephosphorylation of 2-phosphoglycolate. The sequence is that of Phosphoglycolate phosphatase from Sulfolobus acidocaldarius (strain ATCC 33909 / DSM 639 / JCM 8929 / NBRC 15157 / NCIMB 11770).